A 246-amino-acid polypeptide reads, in one-letter code: Short chain dehydrogenase/reductase dmxR12 (246 aa).

NADP(+) contacts are provided by I15, S34, K125, and K164. The active-site Lowers pKa of active site Tyr is K164.

This sequence belongs to the short-chain dehydrogenases/reductases (SDR) family.

The protein operates within secondary metabolite biosynthesis. In terms of biological role, short chain dehydrogenase/reductase; part of the gene cluster that mediates the biosynthesis of the dimeric xanthones cryptosporioptides. The pathway begins with the synthesis of atrochrysone thioester by the polyketide synthase dmx-nrPKS. The atrochrysone carboxyl ACP thioesterase dmxR1 then breaks the thioester bond and releases the atrochrysone carboxylic acid from dmx-nrPKS. Atrochrysone carboxylic acid is decarboxylated by the decarboxylase dmxR15, and oxidized by the anthrone oxygenase dmxR16 to yield emodin. Emodin is then reduced to emodin hydroquinone by the oxidoreductase dmxR7. A-ring reduction by the short chain dehydrogenase dmxR18, dehydration by the scytalone dehydratase-like protein dmxR17 and probable spontaneous re-oxidation, results in overall deoxygenation to chrysophanol. Baeyer-Villiger oxidation by the Baeyer-Villiger monooxygenase (BVMO) dmxR6 then yields monodictylactone in equilibrium with monodictyphenone. In the case of the cryptosporioptides biosynthesis, monodictylactone is reduced at C-12 to an alcohol (by the short chain dehydrogenases dmxR12 or dmxR8) and hydroxylated at C-5 by dmxR9, yielding the electron-rich aromatic which could eliminate H(2)O to form the ortho-quinonemethide, followed by tautomerisation to paraquinone and complete the formal reduction to produce the 10-methylgroup. Conjugate addition of C-4a-OH to the resulting paraquinone by the monooxygenase dmxR10 then gives cyclohexadienone, which is then reduced at C-5 by the short chain dehydrogenase dmxR3 to give the dihydroxanthone. The 6,7-epoxide in the cryptosporioptides could be introduced by the cytochrome P450 monooxygenase dmxL3. The highly reducing PKS dmxL2 manufactures butyrate, which is further carboxylated by dmxL1 to form ethylmalonate. It is not yet clear whether the carboxylation occurs while the butyrate is attached to the ACP of dmxL2, but this unusual fungal metabolite could then be esterified to O-5 by the O-acetyltransferase dmxR13. Finally, dimerization performed by dmxR5 gives the observed dimers cryptosporioptides A, B and C as the final products of the pathway. The chain is Short chain dehydrogenase/reductase dmxR12 from Cryptosporiopsis sp. (strain 8999).